Consider the following 200-residue polypeptide: dITP/XTP pyrophosphatase (200 aa).

7–12 (SNNRGK) is a substrate binding site. Aspartate 68 (proton acceptor) is an active-site residue. Aspartate 68 is a binding site for Mg(2+). Substrate-binding positions include alanine 69, 154-157 (FGFD), lysine 177, and 182-183 (HR).

Belongs to the HAM1 NTPase family. As to quaternary structure, homodimer. Requires Mg(2+) as cofactor.

The catalysed reaction is XTP + H2O = XMP + diphosphate + H(+). It carries out the reaction dITP + H2O = dIMP + diphosphate + H(+). The enzyme catalyses ITP + H2O = IMP + diphosphate + H(+). Its function is as follows. Pyrophosphatase that catalyzes the hydrolysis of nucleoside triphosphates to their monophosphate derivatives, with a high preference for the non-canonical purine nucleotides XTP (xanthosine triphosphate), dITP (deoxyinosine triphosphate) and ITP. Seems to function as a house-cleaning enzyme that removes non-canonical purine nucleotides from the nucleotide pool, thus preventing their incorporation into DNA/RNA and avoiding chromosomal lesions. This Delftia acidovorans (strain DSM 14801 / SPH-1) protein is dITP/XTP pyrophosphatase.